A 326-amino-acid polypeptide reads, in one-letter code: N-acetyl-gamma-glutamyl-phosphate reductase (326 aa).

C155 is a catalytic residue.

It belongs to the NAGSA dehydrogenase family. Type 1 subfamily.

Its subcellular location is the cytoplasm. The enzyme catalyses N-acetyl-L-glutamate 5-semialdehyde + phosphate + NADP(+) = N-acetyl-L-glutamyl 5-phosphate + NADPH + H(+). Its pathway is amino-acid biosynthesis; L-arginine biosynthesis; N(2)-acetyl-L-ornithine from L-glutamate: step 3/4. Its function is as follows. Catalyzes the NADPH-dependent reduction of N-acetyl-5-glutamyl phosphate to yield N-acetyl-L-glutamate 5-semialdehyde. The chain is N-acetyl-gamma-glutamyl-phosphate reductase from Shewanella frigidimarina (strain NCIMB 400).